The following is a 607-amino-acid chain: DNA primase (607 aa).

The segment at 39 to 63 adopts a CHC2-type zinc-finger fold; the sequence is CPFHDDKNPSMSISSSKNIFKCWAC. Residues 267-350 form the Toprim domain; it reads NQLFIVEGYF…IVEIVQWEHN (84 aa). Mg(2+) contacts are provided by E273, D319, and D321.

This sequence belongs to the DnaG primase family. In terms of assembly, monomer. Interacts with DnaB. It depends on Zn(2+) as a cofactor. Requires Mg(2+) as cofactor.

The catalysed reaction is ssDNA + n NTP = ssDNA/pppN(pN)n-1 hybrid + (n-1) diphosphate.. RNA polymerase that catalyzes the synthesis of short RNA molecules used as primers for DNA polymerase during DNA replication. The protein is DNA primase of Mycoplasma genitalium (strain ATCC 33530 / DSM 19775 / NCTC 10195 / G37) (Mycoplasmoides genitalium).